The sequence spans 700 residues: Protein kinase C, eye isozyme (700 aa).

2 consecutive Phorbol-ester/DAG-type zinc fingers follow at residues Gly71 to Cys121 and Lys136 to Cys186. A C2 domain is found at Asp189–Tyr310. Residues Asp222, Asp228, Asp281, Asp283, Ser286, and Asp289 each coordinate Ca(2+). The 259-residue stretch at Phe371 to Phe629 folds into the Protein kinase domain. ATP-binding positions include Ile377 to Val385 and Lys400. Asp495 (proton acceptor) is an active-site residue. Residues Arg630–Ile700 enclose the AGC-kinase C-terminal domain.

It belongs to the protein kinase superfamily. AGC Ser/Thr protein kinase family. PKC subfamily. The cofactor is Ca(2+). In terms of tissue distribution, exclusively expressed in photoreceptor cells.

The enzyme catalyses L-seryl-[protein] + ATP = O-phospho-L-seryl-[protein] + ADP + H(+). It carries out the reaction L-threonyl-[protein] + ATP = O-phospho-L-threonyl-[protein] + ADP + H(+). This is a calcium-activated, phospholipid-dependent, serine- and threonine-specific enzyme. This isozyme is a negative regulator of the visual transduction cascade and has been shown to be required for photoreceptor cell inactivation and light adaptation. Negative regulation is dependent on interaction with scaffolding protein inaD. Acts in a hh-signaling pathway which regulates the Duox-dependent gut immune response to bacterial uracil; required for the activation of Cad99C and consequently Cad99C-dependent endosome formation, which is essential for the Duox-dependent production of reactive oxygen species (ROS) in response to intestinal bacterial infection. The chain is Protein kinase C, eye isozyme (inaC) from Drosophila melanogaster (Fruit fly).